An 811-amino-acid chain; its full sequence is MATQFPLSSEFERLTVYGPTRATVSGTPLDAEEVRKIHAFWRACNYLALGMIYLRGNPLLREPLKPEHIKHRLLGHWGSSPNLAFVYTHLNRAIRKHDLDMIFMAGPGHGAPGVLGPLYLEGSYSEIYPDKDLSEEGLLNFFKQFSFPGGIGSHCTPETPGSIHEGGELGYVLSHACGAAFDNPDLIVAAVVGDGEAETGPLATSWHINKFLNPIRDGAVLPILNLNGYKINNPTLLARISHEELENLLRGYGYTPYFVEGSEPESMHQAMAATVDRSIEDIRAAQTEARASGIARRPRWPMIVLRSPKGWTAPRQIDGHNVEGFWRAHQVPVADVAKNPEHLKLLEGWMRSYKPEELFDAEGCPVAEIREMAPAGLRRMGLNPHANGGHLKKALRIPNFRNYGIEVAKPGQIEAPNTQPLGVFLRDVMKENAHNFRLFGPDENTSNKLDAVYAAAKKFWIAEYFPEDQDGGELAPDGRVMEMLSEHTLEGMLEGYLLTGRHGFLSTYEAFVHVIDSMFNQHAKWLSICNQLSWRQDVASLNLLITSTVWRQDHNGFTHQDPGFLDVVVNKSADVTRIYLPPDVNSLLSVADHCLRSQNYINVIVSDKQLHLQFMDMDAAIAHCTEGLGIWEWASNDEGQEPDVVMACAGDIPTLEALAATALLREEFPELKIRFINVVDLFKLQPESEHPHGLSDKDFDSLFTRDKPVIFNFHGYPWLIHRLAYRRTNHANMHVRGYKEKGNINTPLELAINNQIDRFSLAIDVIDRIPEIAVSGAHAKARFRKQQIACRQYAYEHGVDMPEVAGWRWPG.

Belongs to the XFP family. It depends on thiamine diphosphate as a cofactor.

This is Probable phosphoketolase from Methylococcus capsulatus (strain ATCC 33009 / NCIMB 11132 / Bath).